A 57-amino-acid polypeptide reads, in one-letter code: Large ribosomal subunit protein bL32 (57 aa).

Belongs to the bacterial ribosomal protein bL32 family.

The sequence is that of Large ribosomal subunit protein bL32 from Bacillus pumilus (strain SAFR-032).